The sequence spans 708 residues: E3 ubiquitin-protein ligase Praja-2 (708 aa).

A compositionally biased stretch (basic and acidic residues) spans 1 to 10 (MSQYTEKEPA). Disordered stretches follow at residues 1-30 (MSQYTEKEPAAMDQESGKAVWPKPAGGYQT) and 53-90 (ERSLGRAGDDYEVLELDDVPKENSSGSSPLDQVDSSLP). Serine 2 bears the N-acetylserine mark. Residues 74–90 (ENSSGSSPLDQVDSSLP) show a composition bias toward polar residues. A Phosphoserine modification is found at serine 196. Disordered regions lie at residues 244-342 (GDTE…KQRS), 385-411 (TQRETENNQVTPESGATAGRQEVDNPF), and 425-495 (DEDS…QTSL). Threonine 246 is modified (phosphothreonine). Positions 249-276 (VHQNSQEIQRSSQDEMVSTKQQNNTSQE) are enriched in polar residues. Serine 253, serine 309, and serine 323 each carry phosphoserine. Residues 322-332 (ISSSQVDQETG) show a composition bias toward polar residues. Positions 333–342 (FNRHEAKQRS) are enriched in basic and acidic residues. Serine 342 bears the Phosphoserine; by PKA mark. Threonine 389 is modified (phosphothreonine; by PKA). Serine 432 carries the phosphoserine modification. Positions 467–483 (NEPELQSDSSGPEEENQ) are enriched in acidic residues. Residues 484 to 493 (ELSLQEGEQT) show a composition bias toward polar residues. An interaction with PRKAR1A, PRKAR2A and PRKAR2B region spans residues 531 to 708 (DGNNNLEDDS…PSNDSIAEAP (178 aa)). The tract at residues 550–570 (WSLFDGFADGLGVAEAISYVD) is mediates interaction with TBC1D31. The segment at 634-675 (CPICCSEYIKDDIATELPCHHFFHKPCVSIWLQKSGTCPVCR) adopts an RING-type; atypical zinc-finger fold. The disordered stretch occupies residues 685–708 (ASAAPSSEPDPDAPPSNDSIAEAP). The segment covering 699–708 (PSNDSIAEAP) has biased composition (low complexity).

As to quaternary structure, binds ubiquitin-conjugating enzymes (E2s). In vitro, interacts with the ubiquitin-conjugating enzyme, UBE2D2. The phosphorylated form interacts with PRKAR1A, PRKAR2A and PRKAR2B. Binds the catalytic subunits of cAMP-dependent protein kinase. Interacts with MFHAS1. Interacts with TBC1D31; the interaction is direct and recruits PJA2 to centrosomes.

It localises to the cytoplasm. The protein resides in the cell membrane. Its subcellular location is the endoplasmic reticulum membrane. The protein localises to the golgi apparatus membrane. It is found in the synapse. It localises to the postsynaptic density. The protein resides in the cytoskeleton. Its subcellular location is the microtubule organizing center. The protein localises to the centrosome. The enzyme catalyses S-ubiquitinyl-[E2 ubiquitin-conjugating enzyme]-L-cysteine + [acceptor protein]-L-lysine = [E2 ubiquitin-conjugating enzyme]-L-cysteine + N(6)-ubiquitinyl-[acceptor protein]-L-lysine.. Its pathway is protein modification; protein ubiquitination. Functionally, has E2-dependent E3 ubiquitin-protein ligase activity. Responsible for ubiquitination of cAMP-dependent protein kinase type I and type II-alpha/beta regulatory subunits and for targeting them for proteasomal degradation. Essential for PKA-mediated long-term memory processes. Through the ubiquitination of MFHAS1, positively regulates the TLR2 signaling pathway that leads to the activation of the downstream p38 and JNK MAP kinases and promotes the polarization of macrophages toward the pro-inflammatory M1 phenotype. Plays a role in ciliogenesis by ubiquitinating OFD1. This is E3 ubiquitin-protein ligase Praja-2 (PJA2) from Pongo abelii (Sumatran orangutan).